Reading from the N-terminus, the 100-residue chain is Large ribosomal subunit protein bL21 (100 aa).

This sequence belongs to the bacterial ribosomal protein bL21 family. In terms of assembly, part of the 50S ribosomal subunit. Contacts protein L20.

In terms of biological role, this protein binds to 23S rRNA in the presence of protein L20. In Mycoplasmopsis synoviae (strain 53) (Mycoplasma synoviae), this protein is Large ribosomal subunit protein bL21.